We begin with the raw amino-acid sequence, 1578 residues long: Pentafunctional AROM polypeptide (1578 aa).

Residues 1–384 (MTGPTKISIL…YEPRASVVPN (384 aa)) form a 3-dehydroquinate synthase region. Residues 44–46 (DTN), 81–84 (EVSK), 114–116 (GGV), and Asp-119 contribute to the NAD(+) site. Residue Arg-130 coordinates 7-phospho-2-dehydro-3-deoxy-D-arabino-heptonate. 139-140 (TT) serves as a coordination point for NAD(+). Asp-146 and Lys-152 together coordinate 7-phospho-2-dehydro-3-deoxy-D-arabino-heptonate. Lys-161 serves as a coordination point for NAD(+). Asn-162 lines the 7-phospho-2-dehydro-3-deoxy-D-arabino-heptonate pocket. NAD(+) is bound by residues 179–182 (FLET) and Asn-190. A Zn(2+)-binding site is contributed by Glu-194. 7-phospho-2-dehydro-3-deoxy-D-arabino-heptonate-binding positions include 194-197 (EVIK) and Lys-250. The active-site Proton acceptor; for 3-dehydroquinate synthase activity is Glu-260. Residues 264–268 (RNLLN) and His-271 each bind 7-phospho-2-dehydro-3-deoxy-D-arabino-heptonate. A Zn(2+)-binding site is contributed by His-271. His-275 acts as the Proton acceptor; for 3-dehydroquinate synthase activity in catalysis. 7-phospho-2-dehydro-3-deoxy-D-arabino-heptonate-binding residues include His-287 and Lys-356. Residue His-287 participates in Zn(2+) binding. The tract at residues 397 to 842 (VYPGVSPASE…WDTLRQKFAV (446 aa)) is EPSP synthase. The For EPSP synthase activity role is filled by Cys-824. Residues 864-1055 (SASVFIIGMR…KKKQHSFFVS (192 aa)) are shikimate kinase. Residue 871 to 878 (GMRGAGKT) coordinates ATP. Residues 1056–1276 (LTLPDVRGAD…AAPGQLSATD (221 aa)) are 3-dehydroquinase. Catalysis depends on His-1179, which acts as the Proton acceptor; for 3-dehydroquinate dehydratase activity. Catalysis depends on Lys-1207, which acts as the Schiff-base intermediate with substrate; for 3-dehydroquinate dehydratase activity. The interval 1289-1578 (KKRFALFGSP…YERARAIVLG (290 aa)) is shikimate dehydrogenase.

This sequence in the N-terminal section; belongs to the sugar phosphate cyclases superfamily. Dehydroquinate synthase family. In the 2nd section; belongs to the EPSP synthase family. The protein in the 3rd section; belongs to the shikimate kinase family. It in the 4th section; belongs to the type-I 3-dehydroquinase family. This sequence in the C-terminal section; belongs to the shikimate dehydrogenase family. As to quaternary structure, homodimer. Zn(2+) serves as cofactor.

It localises to the cytoplasm. The catalysed reaction is 7-phospho-2-dehydro-3-deoxy-D-arabino-heptonate = 3-dehydroquinate + phosphate. It carries out the reaction 3-dehydroquinate = 3-dehydroshikimate + H2O. It catalyses the reaction shikimate + NADP(+) = 3-dehydroshikimate + NADPH + H(+). The enzyme catalyses shikimate + ATP = 3-phosphoshikimate + ADP + H(+). The catalysed reaction is 3-phosphoshikimate + phosphoenolpyruvate = 5-O-(1-carboxyvinyl)-3-phosphoshikimate + phosphate. It participates in metabolic intermediate biosynthesis; chorismate biosynthesis; chorismate from D-erythrose 4-phosphate and phosphoenolpyruvate: step 2/7. The protein operates within metabolic intermediate biosynthesis; chorismate biosynthesis; chorismate from D-erythrose 4-phosphate and phosphoenolpyruvate: step 3/7. It functions in the pathway metabolic intermediate biosynthesis; chorismate biosynthesis; chorismate from D-erythrose 4-phosphate and phosphoenolpyruvate: step 4/7. Its pathway is metabolic intermediate biosynthesis; chorismate biosynthesis; chorismate from D-erythrose 4-phosphate and phosphoenolpyruvate: step 5/7. It participates in metabolic intermediate biosynthesis; chorismate biosynthesis; chorismate from D-erythrose 4-phosphate and phosphoenolpyruvate: step 6/7. Its function is as follows. The AROM polypeptide catalyzes 5 consecutive enzymatic reactions in prechorismate polyaromatic amino acid biosynthesis. The protein is Pentafunctional AROM polypeptide of Neosartorya fischeri (strain ATCC 1020 / DSM 3700 / CBS 544.65 / FGSC A1164 / JCM 1740 / NRRL 181 / WB 181) (Aspergillus fischerianus).